Reading from the N-terminus, the 325-residue chain is DNA repair and recombination protein RadA (325 aa).

107-114 (GEFGSGKT) contributes to the ATP binding site.

This sequence belongs to the eukaryotic RecA-like protein family.

Its function is as follows. Involved in DNA repair and in homologous recombination. Binds and assemble on single-stranded DNA to form a nucleoprotein filament. Hydrolyzes ATP in a ssDNA-dependent manner and promotes DNA strand exchange between homologous DNA molecules. The sequence is that of DNA repair and recombination protein RadA from Methanosarcina acetivorans (strain ATCC 35395 / DSM 2834 / JCM 12185 / C2A).